Here is a 187-residue protein sequence, read N- to C-terminus: Orotate phosphoribosyltransferase (187 aa).

5-phospho-alpha-D-ribose 1-diphosphate is bound by residues arginine 98, lysine 99, lysine 102, histidine 104, and 128-136 (EDVTTTGGS). Residues threonine 132 and arginine 160 each coordinate orotate.

This sequence belongs to the purine/pyrimidine phosphoribosyltransferase family. PyrE subfamily. Homodimer. Mg(2+) is required as a cofactor.

The catalysed reaction is orotidine 5'-phosphate + diphosphate = orotate + 5-phospho-alpha-D-ribose 1-diphosphate. Its pathway is pyrimidine metabolism; UMP biosynthesis via de novo pathway; UMP from orotate: step 1/2. Its function is as follows. Catalyzes the transfer of a ribosyl phosphate group from 5-phosphoribose 1-diphosphate to orotate, leading to the formation of orotidine monophosphate (OMP). The polypeptide is Orotate phosphoribosyltransferase (Rhodopseudomonas palustris (strain BisB5)).